We begin with the raw amino-acid sequence, 484 residues long: MAKFTPASLPAEFLDTMRDIMPSSLSMEDFIAACQRPLRRSIRVNTLKISVDAFLQLAQPYGWQLEPIPWCQEGFWLLNAEEENTRLGNTLEHLSGLFYIQEASSMLPASALFHHNDAPGTILDVAAAPGSKTTQIAARLNNEGAIVANEYSASRVKVLHANISRCGVSNTAITHFDGRVFGAALPEYFDAILLDAPCSGEGVVRKDPAAMSHWSQESITDIAATQRDLILSAFHALKPGGVMIYSTCTLNRQENQQVCRWLQAQFPDACEFESLDDLFAGAERATTEEGFLHVFPQIYDSEGFFVARLRKTGSVPPLPRPGYKVGKFPFSPVAHKDRALLTEAARKQGIRWDEELLQLWQRDSEVWLFPAALTSAFGNIKFSRIGIKLAERFPKGFRWQHEAIVALADPNASNAYALNDRIACEWFQGKDSYPEPLPTADELILTYQNTPVGLAKRISSRIKNSLPRDLVRDGASSARPLAKE.

Residues 126–132, E150, D177, and D195 contribute to the S-adenosyl-L-methionine site; that span reads AAAPGSK. C248 (nucleophile) is an active-site residue.

The protein belongs to the class I-like SAM-binding methyltransferase superfamily. RsmB/NOP family.

Its subcellular location is the cytoplasm. It catalyses the reaction cytidine(1407) in 16S rRNA + S-adenosyl-L-methionine = 5-methylcytidine(1407) in 16S rRNA + S-adenosyl-L-homocysteine + H(+). Specifically methylates the cytosine at position 1407 (m5C1407) of 16S rRNA. In Pectobacterium atrosepticum (strain SCRI 1043 / ATCC BAA-672) (Erwinia carotovora subsp. atroseptica), this protein is Ribosomal RNA small subunit methyltransferase F.